Consider the following 100-residue polypeptide: NADH-quinone oxidoreductase subunit K (100 aa).

The next 3 membrane-spanning stretches (helical) occupy residues 4-24 (MQHGLILAAILFTLGLTGLLI), 28-48 (LIFMLISLEVMINSAALAWVV), and 60-80 (IFYLLAITLAAAEASIGLALL).

It belongs to the complex I subunit 4L family. In terms of assembly, NDH-1 is composed of 13 different subunits. Subunits NuoA, H, J, K, L, M, N constitute the membrane sector of the complex.

It localises to the cell membrane. It catalyses the reaction a quinone + NADH + 5 H(+)(in) = a quinol + NAD(+) + 4 H(+)(out). Functionally, NDH-1 shuttles electrons from NADH, via FMN and iron-sulfur (Fe-S) centers, to quinones in the respiratory chain. The immediate electron acceptor for the enzyme in this species is believed to be ubiquinone. Couples the redox reaction to proton translocation (for every two electrons transferred, four hydrogen ions are translocated across the cytoplasmic membrane), and thus conserves the redox energy in a proton gradient. This Hamiltonella defensa subsp. Acyrthosiphon pisum (strain 5AT) protein is NADH-quinone oxidoreductase subunit K.